Here is a 535-residue protein sequence, read N- to C-terminus: Ribonuclease Y 2 (535 aa).

The helical transmembrane segment at 1 to 21 (MLITGLIIGCLLIGLVIGYVV) threads the bilayer. Positions 207–268 (LEHTVTVPNG…IRREVARVAL (62 aa)) constitute a KH domain. In terms of domain architecture, HD spans 334-427 (VLLHSIEVAQ…VAAADAISGA (94 aa)).

It belongs to the RNase Y family.

The protein localises to the cell membrane. Endoribonuclease that initiates mRNA decay. This is Ribonuclease Y 2 from Levilactobacillus brevis (strain ATCC 367 / BCRC 12310 / CIP 105137 / JCM 1170 / LMG 11437 / NCIMB 947 / NCTC 947) (Lactobacillus brevis).